A 292-amino-acid polypeptide reads, in one-letter code: Shikimate dehydrogenase (NADP(+)) (292 aa).

Shikimate is bound by residues Ser25–Ser27 and Thr72. Lys76 acts as the Proton acceptor in catalysis. Residues Asn97 and Asp113 each coordinate shikimate. NADP(+) is bound by residues Gly137–Ala141, Asn161–Lys166, and Met230. Position 232 (Tyr232) interacts with shikimate. Gly254 is a binding site for NADP(+).

The protein belongs to the shikimate dehydrogenase family. Homodimer.

The enzyme catalyses shikimate + NADP(+) = 3-dehydroshikimate + NADPH + H(+). The protein operates within metabolic intermediate biosynthesis; chorismate biosynthesis; chorismate from D-erythrose 4-phosphate and phosphoenolpyruvate: step 4/7. Involved in the biosynthesis of the chorismate, which leads to the biosynthesis of aromatic amino acids. Catalyzes the reversible NADPH linked reduction of 3-dehydroshikimate (DHSA) to yield shikimate (SA). This chain is Shikimate dehydrogenase (NADP(+)), found in Shewanella sp. (strain MR-4).